Here is a 449-residue protein sequence, read N- to C-terminus: Deoxyguanosinetriphosphate triphosphohydrolase-like protein (449 aa).

The disordered stretch occupies residues M1 to R27. Residues Q7–R27 are compositionally biased toward basic and acidic residues. Residues R59 to A255 enclose the HD domain.

The protein belongs to the dGTPase family. Type 2 subfamily.

The sequence is that of Deoxyguanosinetriphosphate triphosphohydrolase-like protein from Shewanella baltica (strain OS223).